Here is a 466-residue protein sequence, read N- to C-terminus: GTPase Der (466 aa).

2 EngA-type G domains span residues 3–167 and 176–350; these read PTLV…PDEP and PKIA…GAAM. GTP is bound by residues 9–16, 56–60, 119–122, 182–189, 229–233, and 294–297; these read GRSNVGKS, DTGGF, NKTE, GRPNVGKS, DTAGL, and NKWD. One can recognise a KH-like domain in the interval 351–435; it reads AHLPTPRLTR…PLRIEFRTGR (85 aa). Positions 433 to 466 are disordered; the sequence is TGRNPYAGKSPAPLTEAEAKRAHRRRRYGRKKYG. The span at 453–466 shows a compositional bias: basic residues; the sequence is RAHRRRRYGRKKYG.

This sequence belongs to the TRAFAC class TrmE-Era-EngA-EngB-Septin-like GTPase superfamily. EngA (Der) GTPase family. As to quaternary structure, associates with the 50S ribosomal subunit.

In terms of biological role, GTPase that plays an essential role in the late steps of ribosome biogenesis. This chain is GTPase Der, found in Nitrosospira multiformis (strain ATCC 25196 / NCIMB 11849 / C 71).